A 232-amino-acid chain; its full sequence is Chromosome partition protein MukE (232 aa).

The segment at 203 to 232 (HTKEPSQGSLLSEEDQEEQAQEEMTEEGEA) is disordered. Positions 214–232 (SEEDQEEQAQEEMTEEGEA) are enriched in acidic residues.

It belongs to the MukE family. In terms of assembly, interacts, and probably forms a ternary complex, with MukF and MukB. The complex formation is stimulated by calcium or magnesium.

Its subcellular location is the cytoplasm. The protein localises to the nucleoid. Functionally, involved in chromosome condensation, segregation and cell cycle progression. May participate in facilitating chromosome segregation by condensation DNA from both sides of a centrally located replisome during cell division. Probably acts via its interaction with MukB and MukF. In Vibrio parahaemolyticus serotype O3:K6 (strain RIMD 2210633), this protein is Chromosome partition protein MukE.